Consider the following 393-residue polypeptide: NAD(P)H-quinone oxidoreductase subunit H, chloroplastic (393 aa).

This sequence belongs to the complex I 49 kDa subunit family. In terms of assembly, NDH is composed of at least 16 different subunits, 5 of which are encoded in the nucleus.

The protein resides in the plastid. It localises to the chloroplast thylakoid membrane. It catalyses the reaction a plastoquinone + NADH + (n+1) H(+)(in) = a plastoquinol + NAD(+) + n H(+)(out). The enzyme catalyses a plastoquinone + NADPH + (n+1) H(+)(in) = a plastoquinol + NADP(+) + n H(+)(out). NDH shuttles electrons from NAD(P)H:plastoquinone, via FMN and iron-sulfur (Fe-S) centers, to quinones in the photosynthetic chain and possibly in a chloroplast respiratory chain. The immediate electron acceptor for the enzyme in this species is believed to be plastoquinone. Couples the redox reaction to proton translocation, and thus conserves the redox energy in a proton gradient. The chain is NAD(P)H-quinone oxidoreductase subunit H, chloroplastic from Trifolium subterraneum (Subterranean clover).